Consider the following 117-residue polypeptide: Hainantoxin-XV-2 (117 aa).

A signal peptide spans methionine 1–serine 20. The interval serine 20–glutamate 55 is disordered. Residues serine 21–arginine 56 constitute a propeptide that is removed on maturation. Positions asparagine 23–glutamate 55 are enriched in basic and acidic residues. Disulfide bonds link cysteine 58/cysteine 72, cysteine 65/cysteine 78, cysteine 69/cysteine 115, and cysteine 71/cysteine 91.

This sequence belongs to the neurotoxin 03 (Tx2) family. 02 subfamily. HNTX-XV sub-subfamily. In terms of tissue distribution, expressed by the venom gland.

It localises to the secreted. Putative ion channel inhibitor. The protein is Hainantoxin-XV-2 of Cyriopagopus hainanus (Chinese bird spider).